The primary structure comprises 66 residues: Conotoxin Lt5.6 (66 aa).

Positions 1–19 are cleaved as a signal peptide; that stretch reads MLCLPVFIILLLLASPAAP. A propeptide spanning residues 20 to 54 is cleaved from the precursor; sequence KSLETRIQNDLIRAGLTDADLKTEKGFLSGLLNVA.

This sequence belongs to the conotoxin T superfamily. Post-translationally, contains 2 disulfide bonds that can be either 'C1-C3, C2-C4' or 'C1-C4, C2-C3', since these disulfide connectivities have been observed for conotoxins with cysteine framework V (for examples, see AC P0DQQ7 and AC P81755). Expressed by the venom duct.

Its subcellular location is the secreted. The chain is Conotoxin Lt5.6 from Conus litteratus (Lettered cone).